The primary structure comprises 608 residues: Protein SHQ1 homolog (608 aa).

2 disordered regions span residues 487-531 and 543-608; these read DAGS…SFYS and IVYE…ASTT. Positions 489 to 498 are enriched in low complexity; that stretch reads GSQGSSPQQQ. Composition is skewed to acidic residues over residues 502–524 and 543–579; these read DDLDLDNDTSGQEDETTTDDESV and IVYEDDEEDEDDDEDGDDDEDGDGDEDEDEDEDEDDS. Polar residues predominate over residues 588–608; that stretch reads EAEGNSVIEQCSNSETAASTT.

This sequence belongs to the SHQ1 family.

Its function is as follows. Required for the quantitative accumulation of H/ACA ribonucleoproteins (RNPs). This chain is Protein SHQ1 homolog, found in Drosophila melanogaster (Fruit fly).